Reading from the N-terminus, the 552-residue chain is Dihydroxy-acid dehydratase (552 aa).

Residue Asp78 coordinates Mg(2+). Cys119 serves as a coordination point for [2Fe-2S] cluster. The Mg(2+) site is built by Asp120 and Lys121. An N6-carboxylysine modification is found at Lys121. Cys191 lines the [2Fe-2S] cluster pocket. A Mg(2+)-binding site is contributed by Glu442. Ser468 functions as the Proton acceptor in the catalytic mechanism.

It belongs to the IlvD/Edd family. As to quaternary structure, homodimer. Requires [2Fe-2S] cluster as cofactor. Mg(2+) is required as a cofactor.

The catalysed reaction is (2R)-2,3-dihydroxy-3-methylbutanoate = 3-methyl-2-oxobutanoate + H2O. The enzyme catalyses (2R,3R)-2,3-dihydroxy-3-methylpentanoate = (S)-3-methyl-2-oxopentanoate + H2O. The protein operates within amino-acid biosynthesis; L-isoleucine biosynthesis; L-isoleucine from 2-oxobutanoate: step 3/4. Its pathway is amino-acid biosynthesis; L-valine biosynthesis; L-valine from pyruvate: step 3/4. Functions in the biosynthesis of branched-chain amino acids. Catalyzes the dehydration of (2R,3R)-2,3-dihydroxy-3-methylpentanoate (2,3-dihydroxy-3-methylvalerate) into 2-oxo-3-methylpentanoate (2-oxo-3-methylvalerate) and of (2R)-2,3-dihydroxy-3-methylbutanoate (2,3-dihydroxyisovalerate) into 2-oxo-3-methylbutanoate (2-oxoisovalerate), the penultimate precursor to L-isoleucine and L-valine, respectively. In Caldicellulosiruptor bescii (strain ATCC BAA-1888 / DSM 6725 / KCTC 15123 / Z-1320) (Anaerocellum thermophilum), this protein is Dihydroxy-acid dehydratase.